A 145-amino-acid chain; its full sequence is Ribonuclease H (145 aa).

Positions methionine 1 to alanine 141 constitute an RNase H type-1 domain. Mg(2+)-binding residues include aspartate 9, glutamate 47, aspartate 69, and aspartate 133.

This sequence belongs to the RNase H family. As to quaternary structure, monomer. Requires Mg(2+) as cofactor.

Its subcellular location is the cytoplasm. The catalysed reaction is Endonucleolytic cleavage to 5'-phosphomonoester.. Endonuclease that specifically degrades the RNA of RNA-DNA hybrids. In Cupriavidus pinatubonensis (strain JMP 134 / LMG 1197) (Cupriavidus necator (strain JMP 134)), this protein is Ribonuclease H.